We begin with the raw amino-acid sequence, 570 residues long: Sulfite reductase [NADPH] hemoprotein beta-component (570 aa).

The [4Fe-4S] cluster site is built by Cys434, Cys440, Cys479, and Cys483. Cys483 serves as a coordination point for siroheme.

Belongs to the nitrite and sulfite reductase 4Fe-4S domain family. Alpha(8)-beta(8). The alpha component is a flavoprotein, the beta component is a hemoprotein. Siroheme serves as cofactor. The cofactor is [4Fe-4S] cluster.

It catalyses the reaction hydrogen sulfide + 3 NADP(+) + 3 H2O = sulfite + 3 NADPH + 4 H(+). It participates in sulfur metabolism; hydrogen sulfide biosynthesis; hydrogen sulfide from sulfite (NADPH route): step 1/1. Functionally, component of the sulfite reductase complex that catalyzes the 6-electron reduction of sulfite to sulfide. This is one of several activities required for the biosynthesis of L-cysteine from sulfate. The protein is Sulfite reductase [NADPH] hemoprotein beta-component of Salmonella schwarzengrund (strain CVM19633).